The following is a 145-amino-acid chain: ATP synthase epsilon chain (145 aa).

A disordered region spans residues 100 to 123 (RAQRAKQRAEDAIKTASEKHDSDE). Basic and acidic residues predominate over residues 106–123 (QRAEDAIKTASEKHDSDE).

The protein belongs to the ATPase epsilon chain family. In terms of assembly, F-type ATPases have 2 components, CF(1) - the catalytic core - and CF(0) - the membrane proton channel. CF(1) has five subunits: alpha(3), beta(3), gamma(1), delta(1), epsilon(1). CF(0) has three main subunits: a, b and c.

The protein resides in the cell membrane. In terms of biological role, produces ATP from ADP in the presence of a proton gradient across the membrane. This chain is ATP synthase epsilon chain, found in Latilactobacillus sakei subsp. sakei (strain 23K) (Lactobacillus sakei subsp. sakei).